Reading from the N-terminus, the 393-residue chain is uncharacterized protein (393 aa).

The interval 164–183 (ASDPHPGKNSPASPTGENKE) is disordered. Residues 173–183 (SPASPTGENKE) are compositionally biased toward polar residues.

This is an uncharacterized protein from Treponema pallidum (strain Nichols).